A 131-amino-acid chain; its full sequence is Large ribosomal subunit protein bL17 (131 aa).

Belongs to the bacterial ribosomal protein bL17 family. As to quaternary structure, part of the 50S ribosomal subunit. Contacts protein L32.

In Oenococcus oeni (strain ATCC BAA-331 / PSU-1), this protein is Large ribosomal subunit protein bL17.